We begin with the raw amino-acid sequence, 421 residues long: MASFPPRVNEKEIVRLRTIGELLAPAAPFDKKCGRENWTVAFAPDGSYFAWSQGHRTVKLVPWSQCLQNFLLHGTKNVTNSSSLRLPRQNSDGGQKNKPREHIIDCGDIVWSLAFGSSVPEKQSRCVNIEWHRFRFGQDQLLLATGLNNGRIKIWDVYTGKLLLNLVDHTEVVRDLTFAPDGSLILVSASRDKTLRVWDLKDDGNMMKVLRGHQNWVYSCAFSPDSSMLCSVGASKAVFLWNMDKYTMIRKLEGHHHDVVACDFSPDGALLATASYDTRVYIWDPHNGDILMEFGHLFPPPTPIFAGGANDRWVRSVSFSHDGLHVASLADDKMVRFWRIDEDYPVQVAPLSNGLCCAFSTDGSVLAAGTHDGSVYFWATPRQVPSLQHLCRMSIRRVMPTQEVQELPIPSKLLEFLSYRI.

WD repeat units follow at residues 32–71 (KCGRENWTVAFAPDGSYFAWSQGHRTVKLVPWSQCLQNFL), 124–165 (SRCV…LLLN), 168–208 (DHTE…NMMK), 212–251 (GHQNWVYSCAFSPDSSMLCSVGASKAVFLWNMDKYTMIRK), 254–293 (GHHHDVVACDFSPDGALLATASYDTRVYIWDPHNGDILME), and 309–346 (ANDRWVRSVSFSHDGLHVASLADDKMVRFWRIDEDYPV). Positions 372 to 421 (DGSVYFWATPRQVPSLQHLCRMSIRRVMPTQEVQELPIPSKLLEFLSYRI) constitute an SOCS box domain.

In terms of assembly, interacts with DIO2. Component of the probable ECS(WSB1) E3 ubiquitin ligase complex which contains CUL5, RNF7/RBX2, Elongin BC complex and WSB1. Component of a probable ECS-like E3 ubiquitin-protein ligase complex which contains CUL5, RBX1, Elongin BC complex and WSB1. Interacts with CUL5, RNF7, ELOB and ELOC. Binds to HIPK2 through WD40 repeats.

Its pathway is protein modification; protein ubiquitination. Its function is as follows. Probable substrate-recognition component of a SCF-like ECS (Elongin-Cullin-SOCS-box protein) E3 ubiquitin ligase complex which mediates the ubiquitination and subsequent proteasomal degradation of target proteins. Recognizes type II iodothyronine deiodinase/DIO2. Confers constitutive instability to HIPK2 through proteasomal degradation. The protein is WD repeat and SOCS box-containing protein 1 (WSB1) of Homo sapiens (Human).